The chain runs to 471 residues: Mitochondrial distribution and morphology protein 10 (471 aa).

The segment at 429–455 (PSSFSSPSRAANSTPAGGGQSVGGGIS) is disordered. Residues 444–455 (AGGGQSVGGGIS) are compositionally biased toward gly residues.

The protein belongs to the MDM10 family. In terms of assembly, component of the ER-mitochondria encounter structure (ERMES) or MDM complex, composed of mmm1, mdm10, mdm12 and mdm34. Associates with the mitochondrial outer membrane sorting assembly machinery SAM(core) complex.

The protein resides in the mitochondrion outer membrane. Component of the ERMES/MDM complex, which serves as a molecular tether to connect the endoplasmic reticulum and mitochondria. Components of this complex are involved in the control of mitochondrial shape and protein biogenesis and may function in phospholipid exchange. mdm10 is involved in the late assembly steps of the general translocase of the mitochondrial outer membrane (TOM complex). Functions in the tom40-specific route of the assembly of outer membrane beta-barrel proteins, including the association of tom40 with the receptor tom22 and small TOM proteins. Can associate with the SAM(core) complex as well as the mdm12-mmm1 complex, both involved in late steps of the major beta-barrel assembly pathway, that is responsible for biogenesis of all outer membrane beta-barrel proteins. May act as a switch that shuttles between both complexes and channels precursor proteins into the tom40-specific pathway. Plays a role in mitochondrial morphology and in the inheritance of mitochondria. The polypeptide is Mitochondrial distribution and morphology protein 10 (mdmB) (Aspergillus fumigatus (strain ATCC MYA-4609 / CBS 101355 / FGSC A1100 / Af293) (Neosartorya fumigata)).